Consider the following 339-residue polypeptide: MKLMKLLKLNINNNNNNKLLLKNLLLLMNKNRLMNKLSNNNKYLSELNNKGNSLQHLNNMNNWKLQNYNYNKNNTINNYINSKLINKLLYKLMSLKNNKIIISKPLYKINMNVINIRFYYYNMNNYNYNNNIYYINMINKLMNRLNINMNNLSNILSYYYNKKVIIEPIKLKYLYNNNEIMTKYISLLDNNKYNNGLLMEYQRTLNNIMPKLNDHNISMNYINNINNINKLKYNNILLNNNNNINNIYNNININNNMNLLMFKYLIGWSIMLKGRLNKNISRISTTYLNNGTFNNKKYLWGNLNNNFKLNYINSNNNIYNYNNINKNGKYNIKVKLNYI.

The protein belongs to the universal ribosomal protein uS3 family.

It localises to the mitochondrion. Its function is as follows. Essential for mitochondrial protein synthesis and required for the maturation of small ribosomal subunits. The sequence is that of Small ribosomal subunit protein uS3m (VAR1) from Candida glabrata (strain ATCC 2001 / BCRC 20586 / JCM 3761 / NBRC 0622 / NRRL Y-65 / CBS 138) (Yeast).